Consider the following 84-residue polypeptide: uncharacterized protein (84 aa).

A run of 2 helical transmembrane segments spans residues 27–47 (INHH…LAML) and 52–72 (IGHV…FVLI).

It to M.tuberculosis Rv2876.

The protein resides in the cell membrane. This is an uncharacterized protein from Mycobacterium leprae (strain TN).